Consider the following 453-residue polypeptide: Indoleamine 2,3-dioxygenase (453 aa).

His331 provides a ligand contact to heme.

This sequence belongs to the indoleamine 2,3-dioxygenase family. Heme is required as a cofactor.

It catalyses the reaction D-tryptophan + O2 = N-formyl-D-kynurenine. The enzyme catalyses L-tryptophan + O2 = N-formyl-L-kynurenine. It participates in cofactor biosynthesis; NAD(+) biosynthesis. Functionally, catalyzes the first step in tryptophan catabolism in order to supply de novo nicotinamide adenine dinucleotide (NAD(+)) via the kynurenine pathway. Plays a role in the cellular response to telomere uncapping. This Saccharomyces cerevisiae (strain ATCC 204508 / S288c) (Baker's yeast) protein is Indoleamine 2,3-dioxygenase (BNA2).